The chain runs to 105 residues: Endogenous retrovirus group K member 8 Rec protein (105 aa).

The interval 1–48 (MNPSEMQRKAPPRRRRHRNRAPLTHKMNKMVTSEEQMKLPSTKKAEPP) is disordered. Basic residues predominate over residues 10–20 (APPRRRRHRNR). A Nuclear localization signal motif is present at residues 13 to 20 (RRRRHRNR). A Nuclear export signal motif is present at residues 50–59 (WAQLKKLTQL).

Forms homodimers, homotrimers, and homotetramers via a C-terminal domain. Associates with XPO1 and with ZNF145.

It is found in the cytoplasm. The protein localises to the nucleus. The protein resides in the nucleolus. In terms of biological role, retroviral replication requires the nuclear export and translation of unspliced, singly-spliced and multiply-spliced derivatives of the initial genomic transcript. Rec interacts with a highly structured RNA element (RcRE) present in the viral 3'LTR and recruits the cellular nuclear export machinery. This permits export to the cytoplasm of unspliced genomic or incompletely spliced subgenomic viral transcripts. The chain is Endogenous retrovirus group K member 8 Rec protein (ERVK-8) from Homo sapiens (Human).